Consider the following 399-residue polypeptide: MSKTNVVIEQTEKFGAHNYHPLPIVISKAEGVWVHDPEGNKYLDMLSAYSALNQGHRHPRIIQALKDQADKVTLTSRAFYNDQLGEFYEKLSAVTGKEMILPMNTGAEAVETALKAVRRWAYDVKKVPENQAEIIVCEGNFHGRTVTVTSFSSAEEYRRGFGPFTPGFKIIPYGDIEALKQAITPNTAAFMLEPIQGEAGIIIPQEGFLKQAQEVCKANNVLLVSDEIQTGFGRTGKMFASDWENVVPDMYIMGKALGGGVFPISAVAADKEILSVFEPGSHGSTFGGNPLGCAVAVAAMDVLADEGLVQRSLEMGAYFMEKLKEINNPIIKEIRGRGLFIGLELTTAARPYCEKLKELGLLCKETHETTIRFAPPLVISKEDLDWAIDRIKQVLHVTE.

An N6-(pyridoxal phosphate)lysine modification is found at K255.

This sequence belongs to the class-III pyridoxal-phosphate-dependent aminotransferase family. OAT subfamily. Pyridoxal 5'-phosphate serves as cofactor.

It is found in the cytoplasm. The catalysed reaction is a 2-oxocarboxylate + L-ornithine = L-glutamate 5-semialdehyde + an L-alpha-amino acid. It functions in the pathway amino-acid biosynthesis; L-proline biosynthesis; L-glutamate 5-semialdehyde from L-ornithine: step 1/1. Its function is as follows. Catalyzes the interconversion of ornithine to glutamate semialdehyde. The chain is Ornithine aminotransferase from Brevibacillus brevis (strain 47 / JCM 6285 / NBRC 100599).